Here is a 174-residue protein sequence, read N- to C-terminus: RNA pyrophosphohydrolase (174 aa).

Positions 14 to 167 (PYRPCVGLMV…KRKVYEEVVA (154 aa)) constitute a Nudix hydrolase domain. A Nudix box motif is present at residues 55 to 76 (GGIDKGEEPLEAAIRELYEETG).

This sequence belongs to the Nudix hydrolase family. RppH subfamily. The cofactor is a divalent metal cation.

Accelerates the degradation of transcripts by removing pyrophosphate from the 5'-end of triphosphorylated RNA, leading to a more labile monophosphorylated state that can stimulate subsequent ribonuclease cleavage. This is RNA pyrophosphohydrolase from Brucella anthropi (strain ATCC 49188 / DSM 6882 / CCUG 24695 / JCM 21032 / LMG 3331 / NBRC 15819 / NCTC 12168 / Alc 37) (Ochrobactrum anthropi).